The primary structure comprises 332 residues: 2,3-diketo-L-gulonate reductase (332 aa).

The active-site Proton donor is the H44. Residues 168 to 174, 224 to 225, and 304 to 306 contribute to the NAD(+) site; these read ITMVDMS, WK, and GHE.

The protein belongs to the LDH2/MDH2 oxidoreductase family. DlgD subfamily. In terms of assembly, homodimer.

The protein localises to the cytoplasm. The enzyme catalyses 3-dehydro-L-gulonate + NAD(+) = 2,3-dioxo-L-gulonate + NADH + H(+). It carries out the reaction 3-dehydro-L-gulonate + NADP(+) = 2,3-dioxo-L-gulonate + NADPH + H(+). Functionally, catalyzes the reduction of 2,3-diketo-L-gulonate in the presence of NADH, to form 3-keto-L-gulonate. In Salmonella paratyphi C (strain RKS4594), this protein is 2,3-diketo-L-gulonate reductase.